Consider the following 883-residue polypeptide: Aldehyde-alcohol dehydrogenase (883 aa).

The aldehyde dehydrogenase stretch occupies residues 13–456; that stretch reads KLVAEKHVDE…DNVSAINLLN (444 aa). NAD(+)-binding positions include 121-126, Gly206, and Gly224; that span reads ITPTTN. The active-site Nucleophile is the Cys257. NAD(+) contacts are provided by residues Glu355, Leu435, and 438–443; that span reads GSYGRN. Residues 457–464 form a linker region; sequence IKKVGRRR. NAD(+)-binding positions include Asp500, Asp534, 561–565, 612–613, Val625, Lys634, and Leu653; these read GSPMD and TT. The Fe cation site is built by Asp668, His672, His736, and His750.

It in the N-terminal section; belongs to the aldehyde dehydrogenase family. This sequence in the C-terminal section; belongs to the iron-containing alcohol dehydrogenase family. Fe(2+) is required as a cofactor.

The catalysed reaction is ethanol + NAD(+) = acetaldehyde + NADH + H(+). It carries out the reaction an aldehyde + NAD(+) + H2O = a carboxylate + NADH + 2 H(+). In terms of biological role, has alcohol dehydrogenase activity. Has aldehyde dehydrogenase activity. May play a role in enhancing virulence in mice. May be considered a potential virulence factor. This is Aldehyde-alcohol dehydrogenase from Streptococcus pneumoniae serotype 4 (strain ATCC BAA-334 / TIGR4).